The following is a 219-amino-acid chain: N-(5'-phosphoribosyl)anthranilate isomerase (219 aa).

Belongs to the TrpF family.

It carries out the reaction N-(5-phospho-beta-D-ribosyl)anthranilate = 1-(2-carboxyphenylamino)-1-deoxy-D-ribulose 5-phosphate. It participates in amino-acid biosynthesis; L-tryptophan biosynthesis; L-tryptophan from chorismate: step 3/5. In Dehalococcoides mccartyi (strain ATCC BAA-2266 / KCTC 15142 / 195) (Dehalococcoides ethenogenes (strain 195)), this protein is N-(5'-phosphoribosyl)anthranilate isomerase.